The chain runs to 275 residues: Large ribosomal subunit protein uL2 (275 aa).

Residues Val-223 to Ser-260 are disordered.

Belongs to the universal ribosomal protein uL2 family. As to quaternary structure, part of the 50S ribosomal subunit. Forms a bridge to the 30S subunit in the 70S ribosome.

Its function is as follows. One of the primary rRNA binding proteins. Required for association of the 30S and 50S subunits to form the 70S ribosome, for tRNA binding and peptide bond formation. It has been suggested to have peptidyltransferase activity; this is somewhat controversial. Makes several contacts with the 16S rRNA in the 70S ribosome. The polypeptide is Large ribosomal subunit protein uL2 (Legionella pneumophila (strain Lens)).